The primary structure comprises 202 residues: MALQETIEQTVTGLGYELVEIERTSGGLLRVTIDMPYLAGTAPGAEQFINAEDCEKVTRQLQFVLEVEGAEYSRLEVSSPGIDRPLRSEKDFERFAGELIDITLKAPIGVAASAGSTVSASRKKFRGTLERAEPVDGKPGWQIVWSDEPAVKPGQKISKKRIPAPLQALGFTLDEINQARLAPVVDFKGRRPKSVADTSIDK.

The protein belongs to the RimP family.

The protein resides in the cytoplasm. Required for maturation of 30S ribosomal subunits. The protein is Ribosome maturation factor RimP of Polaromonas naphthalenivorans (strain CJ2).